The sequence spans 2381 residues: Highly reducing polyketide synthase virA (2381 aa).

One can recognise a Ketosynthase family 3 (KS3) domain in the interval 1–420 (MDALHLACHL…GANGHVILES (420 aa)). Catalysis depends on for beta-ketoacyl synthase activity residues cysteine 171, histidine 306, and histidine 344. Residues 535 to 851 (VFTGQGAQYA…PYSPTLVRKE (317 aa)) are malonyl-CoA:ACP transacylase (MAT) domain. The For malonyltransferase activity role is filled by serine 629. The interval 920–1064 (HELLGTRATA…GSIRVMESTL (145 aa)) is N-terminal hotdog fold. A dehydratase (DH) domain region spans residues 920–1232 (HELLGTRATA…HLRMNEYTGK (313 aa)). A PKS/mFAS DH domain is found at 920 to 1235 (HELLGTRATA…MNEYTGKAPV (316 aa)). Catalysis depends on histidine 952, which acts as the Proton acceptor; for dehydratase activity. The C-terminal hotdog fold stretch occupies residues 1078-1235 (HEVWGMSRWY…MNEYTGKAPV (158 aa)). Aspartate 1144 (proton donor; for dehydratase activity) is an active-site residue. Residues 1639–1956 (GMTDTIHFQQ…NKDRVGKVVV (318 aa)) are enoyl reductase (ER) domain. Positions 1981 to 2159 (TYLLVGCLGG…AVSVGLGMIS (179 aa)) are ketoreductase (KR) domain. A Carrier domain is found at 2297–2375 (TMLDAILRLT…TLAEFIEEKL (79 aa)). The residue at position 2334 (serine 2334) is an O-(pantetheine 4'-phosphoryl)serine.

It functions in the pathway secondary metabolite biosynthesis. Highly reducing polyketide synthase; part of the gene cluster that mediates the biosynthesis of virensols and trichoxide, fungal natural products that contain or are derived from a salicylaldehyde core. The pathway begins with the synthesis of the reduced chain in virensol C by the highly reducing polyketide synthase virA via condensation of one acetate and 8 malonate units. VirA has interesting programming rules since the first 2 ketides are fully reduced, the 3 following ketides undergo beta-dehydration, and the last 3 ketides are only reduced to beta-hydroxys to yield the trihydroxy portion. The production of aldehyde virensol C by virA alone is surprising, since virA does not contain a reductase (R) domain that is typically associated with reductive product release in HRPKS. The cupin-domain enzyme virC is involved in enhancing virA product turnover. The short-chain dehydrogenase virB then oxidizes the C-7 alcohol of virensol C to a ketone, yielding virensol D. Virensol D is further transformed to salicylaldehyde 5-deoxyaurocitrin by the short-chain dehydrogenase virD. VirD catalyzes the dehydrogenation of C-3 to form the beta-ketone aldehyde, which is followed by the generation of the nucleophilic C-2 that is required for the intramolecular aldol condensation between C-2 and C-7, itself followed by dehydration and aromatization which leads to salicylaldehyde 5-deoxyaurocitrin. While the dehydrogenation of virensol D is definitely catalyzed by virD, the aldol condensation and dehydration may be uncatalyzed or assisted by virD. The short chain dehydrogenase virG then converts salicylaldehyde 5-deoxyaurocitrin into virensol B which is further hydroxylated by the cytochrome P450 monooxygenase virE to yield the hydroquinone virensol A. VirI then may oxidize virensol A to form the quinone, while virH performs the epoxidation. Finally, the two remaining short-chain dehydrogenases, virK and virL, are probably responsible for reducing the ketones to the corresponding alcohols to furnish the epoxycyclohexanol structure in trichoxide. The sequence is that of Highly reducing polyketide synthase virA from Hypocrea virens (strain Gv29-8 / FGSC 10586) (Gliocladium virens).